Here is a 451-residue protein sequence, read N- to C-terminus: Probable gamma-glutamyl phosphate reductase (451 aa).

The protein belongs to the gamma-glutamyl phosphate reductase family.

The enzyme catalyses L-glutamate 5-semialdehyde + phosphate + NADP(+) = L-glutamyl 5-phosphate + NADPH + H(+). Its pathway is amino-acid biosynthesis; L-proline biosynthesis; L-glutamate 5-semialdehyde from L-glutamate: step 2/2. Functionally, catalyzes the NADPH dependent reduction of L-gamma-glutamyl 5-phosphate into L-glutamate 5-semialdehyde and phosphate. The product spontaneously undergoes cyclization to form 1-pyrroline-5-carboxylate. This Schizosaccharomyces pombe (strain 972 / ATCC 24843) (Fission yeast) protein is Probable gamma-glutamyl phosphate reductase (pro1).